The primary structure comprises 245 residues: MVLNSDLTTQDKERIINPIERPTITQDLSENVILTTVDDLYNWARLSSLWPLLFGTACCFIEFAALIGSRFDFDRFGLIPRSSPRQADLIITAGTITMKMAPQLVRLYEQMPEPKYVIAMGACTITGGMFSVDSPTAVRGVDKLIPVDVYLPGCPPRPEAIIDAIIKLRKKIANDSMQERSLIRQTHRFYSTTHNLKPVPDILTGKYMQSETRFNPPKELTEAIGLPVPPALLTSQTQKEEQKRG.

Residues cysteine 58, cysteine 59, cysteine 123, and cysteine 154 each coordinate [4Fe-4S] cluster.

The protein belongs to the complex I 20 kDa subunit family. NDH-1 can be composed of about 15 different subunits; different subcomplexes with different compositions have been identified which probably have different functions. Requires [4Fe-4S] cluster as cofactor.

The protein localises to the cellular thylakoid membrane. The catalysed reaction is a plastoquinone + NADH + (n+1) H(+)(in) = a plastoquinol + NAD(+) + n H(+)(out). It catalyses the reaction a plastoquinone + NADPH + (n+1) H(+)(in) = a plastoquinol + NADP(+) + n H(+)(out). NDH-1 shuttles electrons from an unknown electron donor, via FMN and iron-sulfur (Fe-S) centers, to quinones in the respiratory and/or the photosynthetic chain. The immediate electron acceptor for the enzyme in this species is believed to be plastoquinone. Couples the redox reaction to proton translocation, and thus conserves the redox energy in a proton gradient. Cyanobacterial NDH-1 also plays a role in inorganic carbon-concentration. In Nostoc sp. (strain PCC 7120 / SAG 25.82 / UTEX 2576), this protein is NAD(P)H-quinone oxidoreductase subunit K.